We begin with the raw amino-acid sequence, 491 residues long: Katanin p60 ATPase-containing subunit A1 (491 aa).

Residues 1–29 (MSLLMISENVKLAREYALLGNYDSAMVYY) form an interaction with KATNB1 region. Residues 1–75 (MSLLMISENV…VKDIMKTLES (75 aa)) form an interaction with dynein and NDEL1 region. An interaction with microtubules region spans residues 1-185 (MSLLMISENV…EPETNKFDST (185 aa)). Residues S42 and S109 each carry the phosphoserine; by DYRK2 modification. A disordered region spans residues 87 to 185 (QHDLPASEGE…EPETNKFDST (99 aa)). T133 bears the Phosphothreonine; by DYRK2 mark. Basic and acidic residues predominate over residues 145 to 169 (HNDRGKAVRCREKKEQNKGREEKNK). S170 is subject to Phosphoserine. Residue 249 to 256 (GPPGTGKT) coordinates ATP.

Belongs to the AAA ATPase family. Katanin p60 subunit A1 subfamily. In terms of assembly, can homooligomerize into hexameric rings, which may be promoted by interaction with microtubules. Interacts with KATNB1, which may serve as a targeting subunit. Interacts with ASPM; the katanin complex formation KATNA1:KATNB1 is required for the association of ASPM Interacts with dynein and NDEL1. Associates with the E3 ligase complex containing DYRK2, EDD/UBR5, DDB1 and DCAF1 proteins (EDVP complex). Interacts with KLHL42 (via the kelch domains). Interacts with CUL3; the interaction is enhanced by KLHL42. Interacts with KATNB1 and KATNBL1. Interacts with CAMSAP2 and CAMSAP3; leading to regulate the length of CAMSAP-decorated microtubule stretches. Post-translationally, phosphorylation by DYRK2 triggers ubiquitination and subsequent degradation. In terms of processing, ubiquitinated by the BCR(KLHL42) E3 ubiquitin ligase complex, leading to its proteasomal degradation. Ubiquitinated by the EDVP E3 ligase complex and subsequently targeted for proteasomal degradation.

It localises to the cytoplasm. It is found in the midbody. The protein localises to the cytoskeleton. Its subcellular location is the microtubule organizing center. The protein resides in the centrosome. It localises to the spindle pole. It is found in the spindle. The catalysed reaction is n ATP + n H2O + a microtubule = n ADP + n phosphate + (n+1) alpha/beta tubulin heterodimers.. With respect to regulation, ATPase activity is stimulated by microtubules, which promote homooligomerization. ATP-dependent microtubule severing is stimulated by interaction with KATNB1. Catalytic subunit of a complex which severs microtubules in an ATP-dependent manner. Microtubule severing may promote rapid reorganization of cellular microtubule arrays and the release of microtubules from the centrosome following nucleation. Microtubule release from the mitotic spindle poles may allow depolymerization of the microtubule end proximal to the spindle pole, leading to poleward microtubule flux and poleward motion of chromosome. Microtubule release within the cell body of neurons may be required for their transport into neuronal processes by microtubule-dependent motor proteins. This transport is required for axonal growth. The protein is Katanin p60 ATPase-containing subunit A1 of Macaca fascicularis (Crab-eating macaque).